A 160-amino-acid polypeptide reads, in one-letter code: Protransforming growth factor alpha (160 aa).

The signal sequence occupies residues 1–23 (MVPSAGQLALFALGIVLAACQAL). A propeptide spans 24–39 (ENSTSPLSADPPVAAA) (removed in mature form). Residues 24–98 (ENSTSPLSAD…AVVAASQKKQ (75 aa)) are Extracellular-facing. Residue Asn-25 is glycosylated (N-linked (GlcNAc...) asparagine). In terms of domain architecture, EGF-like spans 43 to 83 (HFNDCPDSHTQFCFHGTCRFLVQEDKPACVCHSGYVGARCE). 3 disulfides stabilise this stretch: Cys-47-Cys-60, Cys-55-Cys-71, and Cys-73-Cys-82. A propeptide spans 90–160 (VVAASQKKQA…TACCHSETVV (71 aa)) (removed in mature form). A helical transmembrane segment spans residues 99–124 (AITALVVVSIVALAVLIITCVLIHCC). Over 125-160 (QVRKHCEWCRALICRHEKPSALLKGRTACCHSETVV) the chain is Cytoplasmic. 2 S-palmitoyl cysteine lipidation sites follow: Cys-153 and Cys-154.

As to quaternary structure, interacts with the PDZ domains of MAGI3, SDCBP and SNTA1. The interaction with SDCBP, is required for the targeting to the cell surface. In the endoplasmic reticulum, in its immature form (i.e. with a prosegment and lacking full N-glycosylation), interacts with CNIH. In the Golgi apparatus, may form a complex with CNIH and GORASP2. Interacts (via cytoplasmic C-terminal domain) with NKD2. In terms of tissue distribution, isoform 1, isoform 3 and isoform 4 are expressed in keratinocytes and tumor-derived cell lines.

It is found in the secreted. The protein localises to the extracellular space. The protein resides in the cell membrane. Its function is as follows. TGF alpha is a mitogenic polypeptide that is able to bind to the EGF receptor/EGFR and to act synergistically with TGF beta to promote anchorage-independent cell proliferation in soft agar. This is Protransforming growth factor alpha (TGFA) from Homo sapiens (Human).